The following is a 210-amino-acid chain: Germin-like protein subfamily 3 member 4 (210 aa).

The N-terminal stretch at 1–18 (MKFFVVIVFCAIFLSVSG) is a signal peptide. Cys-27 and Cys-44 are oxidised to a cystine. Positions 58–190 (TKLTEAGDTD…VFGIDQEHIK (133 aa)) constitute a Cupin type-1 domain. Asn-73 carries an N-linked (GlcNAc...) asparagine glycan. Positions 106, 108, 113, and 152 each coordinate Mn(2+).

The protein belongs to the germin family. In terms of assembly, oligomer (believed to be a pentamer but probably hexamer).

The protein resides in the secreted. Its subcellular location is the extracellular space. The protein localises to the apoplast. In terms of biological role, may play a role in plant defense. Probably has no oxalate oxidase activity even if the active site is conserved. The protein is Germin-like protein subfamily 3 member 4 of Arabidopsis thaliana (Mouse-ear cress).